A 113-amino-acid polypeptide reads, in one-letter code: Large ribosomal subunit protein uL22 (113 aa).

This sequence belongs to the universal ribosomal protein uL22 family. Part of the 50S ribosomal subunit.

Its function is as follows. This protein binds specifically to 23S rRNA; its binding is stimulated by other ribosomal proteins, e.g. L4, L17, and L20. It is important during the early stages of 50S assembly. It makes multiple contacts with different domains of the 23S rRNA in the assembled 50S subunit and ribosome. The globular domain of the protein is located near the polypeptide exit tunnel on the outside of the subunit, while an extended beta-hairpin is found that lines the wall of the exit tunnel in the center of the 70S ribosome. This chain is Large ribosomal subunit protein uL22, found in Opitutus terrae (strain DSM 11246 / JCM 15787 / PB90-1).